The primary structure comprises 369 residues: Melanoma-associated antigen 10 (369 aa).

A disordered region spans residues 1-131 (MPRAPKRQRC…VLPDSESLPR (131 aa)). A compositionally biased stretch (low complexity) spans 39–62 (SSSTSTSSSFPSSFPSSSSSSSSS). Polar residues-rich tracts occupy residues 85–96 (QSAQIACSSPSV) and 107–121 (EGSS…STLQ). The MAGE domain occupies 134–333 (IDEKVTDLVQ…RSFPLWYEEA (200 aa)). Residues 340-369 (RAQDRIATTDDTTAMASASSSATGSFSYPE) form a disordered region. The span at 348-369 (TDDTTAMASASSSATGSFSYPE) shows a compositional bias: low complexity.

Expressed in many tumors of several types, such as melanoma, head and neck squamous cell carcinoma, lung carcinoma and breast carcinoma, but not in normal tissues except for spermatogonia, spermatocytes and placenta.

It localises to the nucleus. Its function is as follows. Not known, though may play a role in embryonal development and tumor transformation or aspects of tumor progression. In Homo sapiens (Human), this protein is Melanoma-associated antigen 10 (MAGEA10).